The primary structure comprises 122 residues: Large ribosomal subunit protein bL12 (122 aa).

This sequence belongs to the bacterial ribosomal protein bL12 family. In terms of assembly, homodimer. Part of the ribosomal stalk of the 50S ribosomal subunit. Forms a multimeric L10(L12)X complex, where L10 forms an elongated spine to which 2 to 4 L12 dimers bind in a sequential fashion. Binds GTP-bound translation factors.

In terms of biological role, forms part of the ribosomal stalk which helps the ribosome interact with GTP-bound translation factors. Is thus essential for accurate translation. This chain is Large ribosomal subunit protein bL12, found in Mycoplasma mycoides subsp. mycoides SC (strain CCUG 32753 / NCTC 10114 / PG1).